The primary structure comprises 710 residues: Elongation factor G (710 aa).

A tr-type G domain is found at 8-290 (SQYRNIGISA…AIVEYLPSPM (283 aa)). GTP-binding positions include 17–24 (AHIDAGKT), 88–92 (DTPGH), and 142–145 (NKMD).

Belongs to the TRAFAC class translation factor GTPase superfamily. Classic translation factor GTPase family. EF-G/EF-2 subfamily.

It is found in the cytoplasm. Catalyzes the GTP-dependent ribosomal translocation step during translation elongation. During this step, the ribosome changes from the pre-translocational (PRE) to the post-translocational (POST) state as the newly formed A-site-bound peptidyl-tRNA and P-site-bound deacylated tRNA move to the P and E sites, respectively. Catalyzes the coordinated movement of the two tRNA molecules, the mRNA and conformational changes in the ribosome. The protein is Elongation factor G of Buchnera aphidicola subsp. Baizongia pistaciae (strain Bp).